Consider the following 257-residue polypeptide: MSDLKKAAQQAINLMDLTTLNDDDTDQKVIDLCHKAKTPAGDTAAICIYPRFIPIARKTLNEIGGDDIKIATVTNFPHGNDDIAIAVLETRAAVAYGADEVDVVFPYRALMAGNETVGFELVKACKEACGDEAILKVIIESGVLADPALIRKASELSIDAGADFIKTSTGKVAVNATLEAAEIMMTVISEKNTKVGFKPAGGVKDAAAAAEFLGVAARLLGDDWATPATFRFGASSLLTNLLHTLELGDAPKGPQGY.

Catalysis depends on aspartate 102, which acts as the Proton donor/acceptor. The active-site Schiff-base intermediate with acetaldehyde is lysine 166. Lysine 198 functions as the Proton donor/acceptor in the catalytic mechanism.

This sequence belongs to the DeoC/FbaB aldolase family. DeoC type 2 subfamily.

Its subcellular location is the cytoplasm. It carries out the reaction 2-deoxy-D-ribose 5-phosphate = D-glyceraldehyde 3-phosphate + acetaldehyde. It functions in the pathway carbohydrate degradation; 2-deoxy-D-ribose 1-phosphate degradation; D-glyceraldehyde 3-phosphate and acetaldehyde from 2-deoxy-alpha-D-ribose 1-phosphate: step 2/2. Its function is as follows. Catalyzes a reversible aldol reaction between acetaldehyde and D-glyceraldehyde 3-phosphate to generate 2-deoxy-D-ribose 5-phosphate. The chain is Deoxyribose-phosphate aldolase from Shewanella piezotolerans (strain WP3 / JCM 13877).